Consider the following 683-residue polypeptide: Amino acid transporter heavy chain SLC3A1 (683 aa).

Over residues 1-10 (MNEDKDKRDS) the composition is skewed to basic and acidic residues. Positions 1 to 50 (MNEDKDKRDSIQMSMKGCRTNNGFVQNEDIQEQDPDSRDTPQSNAVSIPA) are disordered. Topologically, residues 1-86 (MNEDKDKRDS…ARYRVPREIL (86 aa)) are cytoplasmic. Position 10 is a phosphoserine (S10). A helical; Signal-anchor for type II membrane protein transmembrane segment spans residues 87 to 107 (FWLTVVSVFLLIGATIAIIII). Residues 108–683 (SPKCLDWWQA…SVLDLLYSSC (576 aa)) lie on the Extracellular side of the membrane. Position 211 (N211) interacts with Ca(2+). N211, N238, and N258 each carry an N-linked (GlcNAc...) asparagine glycan. A disulfide bridge connects residues C239 and C270. D281, F315, L316, and E318 together coordinate Ca(2+). N329 is a glycosylation site (N-linked (GlcNAc...) asparagine). Residue S383 is modified to Phosphoserine. Residues N510, N520, and N574 are each glycosylated (N-linked (GlcNAc...) asparagine). Cystine bridges form between C568-C664 and C671-C683.

In terms of assembly, disulfide-linked heterodimer composed of the catalytic light subunit SLC7A9 and the heavy subunit SLC3A1. The heterodimer is the minimal functional unit. Assembles in non-covalently linked heterotetramers (dimers of heterodimers) and higher order oligomers; the oligomerization is mediated by SLC3A1 likely to prevent degradation in the endoplasmic reticulum and facilitate heteromer trafficking to the plasma membrane. Disulfide-linked heterodimer composed of the catalytic light subunit SLC7A13 and the heavy subunit SLC3A1. In terms of tissue distribution, predominantly expressed in kidney and intestine. In kidney localized to the apical membrane of the proximal tubules.

It localises to the cell membrane. Its subcellular location is the apical cell membrane. In terms of biological role, acts as a chaperone that facilitates biogenesis and trafficking of functional transporter heteromers to the plasma membrane. Associates with SLC7A9 to form a functional transporter complex that mediates the electrogenic exchange between cationic amino acids and neutral amino acids, with a stoichiometry of 1:1. SLC7A9-SLC3A1 transporter has system b(0,+)-like activity with high affinity for extracellular cationic amino acids and L-cystine and lower affinity for intracellular neutral amino acids. Substrate exchange is driven by high concentration of intracellular neutral amino acids and the intracellular reduction of L-cystine to L-cysteine. SLC7A9-SLC3A1 acts as a major transporter for reabsorption of L-cystine and dibasic amino acids across the brush border membrane in early proximal tubules. Associates with SLC7A13 to form a functional complex that transports anionic and neutral amino acids via exchange or facilitated diffusion. SLC7A13-SLC3A1 may act as a major transporter for L-cystine in late proximal tubules, ensuring its reabsorption from the luminal fluid in exchange for cytosolic L-glutamate or L-aspartate. The sequence is that of Amino acid transporter heavy chain SLC3A1 (Slc3a1) from Rattus norvegicus (Rat).